Consider the following 373-residue polypeptide: LIM domain-binding protein 2 (373 aa).

2 disordered regions span residues 244 to 291 and 327 to 373; these read APPA…ANLS and QYDA…QASQ. Positions 263 to 280 are enriched in low complexity; sequence STSSTSNSSAGNNANSTG. Residues 298–337 enclose the LIM interaction domain (LID) domain; that stretch reads DVMVVGEPTLMGGEFGDEDERLITRLENTQYDAANGMDDE. A compositionally biased stretch (polar residues) spans 341–361; that stretch reads NNSPALGNNSPWNSKPPATQE.

This sequence belongs to the LDB family. As to quaternary structure, interacts with LHX9. Interacts with SLK; leading to negatively regulate SLK kinase activity. Interacts with LMO4. Ubiquitinated by RLIM/RNF12, leading to its degradation by the proteasome.

The protein resides in the nucleus. Functionally, transcription cofactor. Binds to the LIM domain of a wide variety of LIM domain-containing transcription factors. This Homo sapiens (Human) protein is LIM domain-binding protein 2 (LDB2).